Reading from the N-terminus, the 330-residue chain is Urokinase plasminogen activator surface receptor (330 aa).

Residues 1–20 form the signal peptide; that stretch reads MGQPLLLLLLVYTYIPGSWG. UPAR/Ly6 domains are found at residues 21–112, 113–208, and 209–300; these read LRCL…RNRY, LECA…PPNG, and LQCY…PGKG. Cystine bridges form between Cys-23-Cys-44, Cys-26-Cys-32, and Cys-37-Cys-65. N-linked (GlcNAc...) asparagine glycosylation is present at Asn-28. Asn-72 carries N-linked (GlcNAc...) asparagine glycosylation. Cystine bridges form between Cys-91–Cys-96, Cys-115–Cys-142, Cys-118–Cys-125, Cys-135–Cys-164, Cys-170–Cys-187, Cys-188–Cys-193, Cys-211–Cys-239, Cys-214–Cys-222, Cys-232–Cys-258, Cys-264–Cys-282, and Cys-283–Cys-288. 2 N-linked (GlcNAc...) asparagine glycosylation sites follow: Asn-179 and Asn-189. An N-linked (GlcNAc...) asparagine glycan is attached at Asn-279. A lipid anchor (GPI-anchor amidated glycine) is attached at Gly-300. Residues 301 to 330 constitute a propeptide, removed in mature form; sequence GAPKTSPAHLSFFVSLLLTARLWGATLLCT.

As to quaternary structure, monomer. Interacts (via the UPAR/Ly6 domains) with SRPX2. Interacts with MRC2. Interacts with SORL1 (via N-terminal ectodomain); this interaction decreases PLAUR internalization. The ternary complex composed of PLAUR-PLAU-SERPINE1 also interacts with SORL1. Interacts with CD82; this interaction prevents PLAUR from binding to its high affinity ligand PLAU.

Its subcellular location is the cell membrane. In terms of biological role, acts as a receptor for urokinase plasminogen activator. Plays a role in localizing and promoting plasmin formation. Mediates the proteolysis-independent signal transduction activation effects of U-PA. This Bos taurus (Bovine) protein is Urokinase plasminogen activator surface receptor (PLAUR).